We begin with the raw amino-acid sequence, 140 residues long: MCCYCVCCTVSDFILYIVAFFFPPAAVLLRSGPCSSDFLLNVLLTLLGFLPGMLHAFYYITITSPLRNAEYVYYYQQGWVDSERNVPSNRPQNSQTPQNRPQQGSSARNVYPSVETPLLQGAAPHDNKQSLVESPPPYVP.

At 1–8 the chain is on the cytoplasmic side; sequence MCCYCVCC. Residues C2, C3, C5, C7, and C8 are each lipidated (S-palmitoyl cysteine). Residues 9–29 form a helical membrane-spanning segment; it reads TVSDFILYIVAFFFPPAAVLL. The Vacuolar portion of the chain corresponds to 30–41; it reads RSGPCSSDFLLN. A helical membrane pass occupies residues 42 to 62; the sequence is VLLTLLGFLPGMLHAFYYITI. At 63–140 the chain is on the cytoplasmic side; that stretch reads TSPLRNAEYV…LVESPPPYVP (78 aa). Residues 84–140 form a disordered region; sequence RNVPSNRPQNSQTPQNRPQQGSSARNVYPSVETPLLQGAAPHDNKQSLVESPPPYVP. A compositionally biased stretch (polar residues) spans 85-108; sequence NVPSNRPQNSQTPQNRPQQGSSAR. A Glycyl lysine isopeptide (Lys-Gly) (interchain with G-Cter in ubiquitin) cross-link involves residue K128. S134 is subject to Phosphoserine.

The protein belongs to the UPF0057 (PMP3) family.

It is found in the vacuole membrane. The protein is Protein SNA4 (SNA4) of Saccharomyces cerevisiae (strain ATCC 204508 / S288c) (Baker's yeast).